Consider the following 465-residue polypeptide: UDP-N-acetylmuramate--L-alanine ligase (465 aa).

An ATP-binding site is contributed by Gly118 to Thr124.

It belongs to the MurCDEF family.

The protein resides in the cytoplasm. The catalysed reaction is UDP-N-acetyl-alpha-D-muramate + L-alanine + ATP = UDP-N-acetyl-alpha-D-muramoyl-L-alanine + ADP + phosphate + H(+). It functions in the pathway cell wall biogenesis; peptidoglycan biosynthesis. Functionally, cell wall formation. The chain is UDP-N-acetylmuramate--L-alanine ligase from Ruegeria pomeroyi (strain ATCC 700808 / DSM 15171 / DSS-3) (Silicibacter pomeroyi).